We begin with the raw amino-acid sequence, 286 residues long: 33 kDa chaperonin (286 aa).

Cystine bridges form between Cys-225-Cys-227 and Cys-258-Cys-261.

The protein belongs to the HSP33 family. Under oxidizing conditions two disulfide bonds are formed involving the reactive cysteines. Under reducing conditions zinc is bound to the reactive cysteines and the protein is inactive.

The protein localises to the cytoplasm. Functionally, redox regulated molecular chaperone. Protects both thermally unfolding and oxidatively damaged proteins from irreversible aggregation. Plays an important role in the bacterial defense system toward oxidative stress. The protein is 33 kDa chaperonin of Shewanella baltica (strain OS223).